The following is a 122-amino-acid chain: Large ribosomal subunit protein uL14 (122 aa).

The protein belongs to the universal ribosomal protein uL14 family. As to quaternary structure, part of the 50S ribosomal subunit. Forms a cluster with proteins L3 and L19. In the 70S ribosome, L14 and L19 interact and together make contacts with the 16S rRNA in bridges B5 and B8.

Binds to 23S rRNA. Forms part of two intersubunit bridges in the 70S ribosome. In Leuconostoc citreum (strain KM20), this protein is Large ribosomal subunit protein uL14.